Here is a 361-residue protein sequence, read N- to C-terminus: Alanine racemase (361 aa).

The Proton acceptor; specific for D-alanine role is filled by K35. K35 carries the N6-(pyridoxal phosphate)lysine modification. R132 lines the substrate pocket. Residue Y257 is the Proton acceptor; specific for L-alanine of the active site. Substrate is bound at residue M305.

The protein belongs to the alanine racemase family. Pyridoxal 5'-phosphate is required as a cofactor.

The catalysed reaction is L-alanine = D-alanine. The protein operates within amino-acid biosynthesis; D-alanine biosynthesis; D-alanine from L-alanine: step 1/1. Catalyzes the interconversion of L-alanine and D-alanine. May also act on other amino acids. This chain is Alanine racemase (alr), found in Thioalkalivibrio sulfidiphilus (strain HL-EbGR7).